A 654-amino-acid polypeptide reads, in one-letter code: Fructose-1,6-bisphosphatase class 3 (654 aa).

The segment at 288–307 (NPAFKPKKRPDKHERLTQRE) is disordered. Basic and acidic residues predominate over residues 298–307 (DKHERLTQRE).

The protein belongs to the FBPase class 3 family. Mn(2+) is required as a cofactor.

It carries out the reaction beta-D-fructose 1,6-bisphosphate + H2O = beta-D-fructose 6-phosphate + phosphate. The protein operates within carbohydrate biosynthesis; gluconeogenesis. In Staphylococcus aureus (strain MRSA252), this protein is Fructose-1,6-bisphosphatase class 3.